The following is a 125-amino-acid chain: Mating factor alpha (125 aa).

The N-terminal stretch at 1–22 (MKLFTTLSASLIFIHSLGSTRA) is a signal peptide. Residues N57 and N67 are each glycosylated (N-linked (GlcNAc...) asparagine).

In Lachancea kluyveri (Yeast), this protein is Mating factor alpha.